The primary structure comprises 399 residues: Tyrosine--tRNA ligase (399 aa).

Tyr-36 serves as a coordination point for L-tyrosine. A 'HIGH' region motif is present at residues 41–50; it reads PTAPSLHIGN. L-tyrosine-binding residues include Tyr-166 and Gln-170. A 'KMSKS' region motif is present at residues 226-230; the sequence is KMGKS. Residue Lys-229 participates in ATP binding. The region spanning 332-395 is the S4 RNA-binding domain; the sequence is TRLVDVIVDL…KKRFVTVQVI (64 aa).

It belongs to the class-I aminoacyl-tRNA synthetase family. TyrS type 1 subfamily. In terms of assembly, homodimer.

It localises to the cytoplasm. It carries out the reaction tRNA(Tyr) + L-tyrosine + ATP = L-tyrosyl-tRNA(Tyr) + AMP + diphosphate + H(+). In terms of biological role, catalyzes the attachment of tyrosine to tRNA(Tyr) in a two-step reaction: tyrosine is first activated by ATP to form Tyr-AMP and then transferred to the acceptor end of tRNA(Tyr). The chain is Tyrosine--tRNA ligase from Mycoplasma pneumoniae (strain ATCC 29342 / M129 / Subtype 1) (Mycoplasmoides pneumoniae).